The chain runs to 303 residues: UDP-3-O-acyl-N-acetylglucosamine deacetylase (303 aa).

His78, His237, and Asp241 together coordinate Zn(2+). Residue His264 is the Proton donor of the active site.

Belongs to the LpxC family. Requires Zn(2+) as cofactor.

The enzyme catalyses a UDP-3-O-[(3R)-3-hydroxyacyl]-N-acetyl-alpha-D-glucosamine + H2O = a UDP-3-O-[(3R)-3-hydroxyacyl]-alpha-D-glucosamine + acetate. Its pathway is glycolipid biosynthesis; lipid IV(A) biosynthesis; lipid IV(A) from (3R)-3-hydroxytetradecanoyl-[acyl-carrier-protein] and UDP-N-acetyl-alpha-D-glucosamine: step 2/6. Catalyzes the hydrolysis of UDP-3-O-myristoyl-N-acetylglucosamine to form UDP-3-O-myristoylglucosamine and acetate, the committed step in lipid A biosynthesis. This Stenotrophomonas maltophilia (strain R551-3) protein is UDP-3-O-acyl-N-acetylglucosamine deacetylase.